The sequence spans 122 residues: Large ribosomal subunit protein uL14 (122 aa).

This sequence belongs to the universal ribosomal protein uL14 family. In terms of assembly, part of the 50S ribosomal subunit. Forms a cluster with proteins L3 and L19. In the 70S ribosome, L14 and L19 interact and together make contacts with the 16S rRNA in bridges B5 and B8.

Binds to 23S rRNA. Forms part of two intersubunit bridges in the 70S ribosome. The chain is Large ribosomal subunit protein uL14 from Dechloromonas aromatica (strain RCB).